Reading from the N-terminus, the 1029-residue chain is Protein phosphatase 1 regulatory subunit 12A (1029 aa).

The KVKF motif signature appears at 35–38; it reads KVKF. ANK repeat units follow at residues 39–68, 72–101, 105–134, 138–164, 198–227, and 231–260; these read DDGAVFLAACSSGDTDEVLKLLHRGADINY, DGLTALHQACIDDNVDMVKFLVENGANINQ, EGWIPLHAAASCGYLDIAEFLIGQGAHVGA, EGDTPLDIAEEEAMEELLQNEVNRQGV, SGGTALHVAAAKGYTEVLKLLIQAGYDVNI, and DGWTPLHAAAHWGKEEACRILVDNLCDMET. (3S)-3-hydroxyasparagine; by HIF1AN occurs at positions 67 and 100. N226 is subject to (3S)-3-hydroxyasparagine; by HIF1AN. The segment at 290–786 is disordered; the sequence is LHSEKRDKKS…APSSSSLSTL (497 aa). Residues 291–300 are compositionally biased toward basic and acidic residues; that stretch reads HSEKRDKKSP. Phosphoserine is present on S299. Positions 302–314 are enriched in polar residues; the sequence is IESTANMENNQPQ. The segment covering 318–353 has biased composition (basic and acidic residues); the sequence is KNKETLIIEPEKNASRIESLEHEKADEEEEGKKDES. Residues 357-369 show a composition bias toward acidic residues; sequence SEEDEEDDSESEA. Residues 385-402 are compositionally biased toward low complexity; the sequence is TSSTQAAPAAVTAPTLSS. Residues S422 and S432 each carry the phosphoserine modification. Residues 422 to 432 are compositionally biased toward basic and acidic residues; sequence SPKEEERKDES. At T443 the chain carries Phosphothreonine. S445 carries the post-translational modification Phosphoserine; by NUAK1. Y446 is modified (phosphotyrosine). A compositionally biased stretch (low complexity) spans 469 to 480; that stretch reads RSASSPRLSSSL. Phosphoserine; by NUAK1 is present on S472. A Phosphoserine; by CDK1 modification is found at S473. S477 carries the post-translational modification Phosphoserine. The segment covering 481-491 has biased composition (basic and acidic residues); that stretch reads DNKEKEKDNKG. 2 positions are modified to phosphoserine: S507 and S509. A compositionally biased stretch (polar residues) spans 540-551; sequence NSSINEGSTYHR. Positions 564–578 are enriched in low complexity; it reads SCSVPSTTSTPTVTS. Residues 585-594 are compositionally biased toward polar residues; the sequence is SLPSSTSTAA. Residues 596 to 610 are compositionally biased toward low complexity; the sequence is TPPGSSSAGTQSSTS. Phosphoserine occurs at positions 601 and 618. Over residues 614–625 the composition is skewed to basic and acidic residues; that stretch reads WAEDSTEKEKDS. Over residues 626 to 656 the composition is skewed to low complexity; it reads APTAVTIPVAPTVVNAAAPSTTTLTTTTAGT. Residues 671–680 show a composition bias toward basic and acidic residues; it reads VRDEESESQR. Residues 680 to 863 form an interaction with ROCK2 region; it reads RKARSRQARQ…VSFWTQDSDE (184 aa). A compositionally biased stretch (basic residues) spans 681 to 691; sequence KARSRQARQSR. A phosphoserine; by PKA and PKG; in vitro mark is found at S690 and S693. At T694 the chain carries Phosphothreonine; by ROCK1, ROCK2, CDC42BP, ZIPK/DAPK3 and RAF1. Residues 716-765 are compositionally biased toward basic and acidic residues; it reads RTREQENEEKEKEEKEKQDKEKQEEKKESEASREDEYKQKYSRTYDETYT. Low complexity predominate over residues 771 to 786; the sequence is STSSSSAPSSSSLSTL. S801 carries the phosphoserine modification. The disordered stretch occupies residues 808-927; the sequence is AYSRGLAKEN…PYSSRLEKDD (120 aa). A compositionally biased stretch (basic and acidic residues) spans 813–839; the sequence is LAKENEREGEKKEEEKEGEDKSQPKSI. Positions 840–851 are enriched in basic residues; that stretch reads RERRRPREKRRS. The residue at position 851 (S851) is a Phosphoserine; by ROCK2. 2 positions are modified to phosphoserine: S861 and S870. Residues 866 to 882 are compositionally biased toward basic and acidic residues; it reads QERQSDTEDGSSKRETQ. Over residues 883-897 the composition is skewed to low complexity; sequence TDSVSRYDSSSTSSS. A phosphoserine mark is found at S902 and S907. Position 909 is a phosphoserine; by NUAK1 (S909). Positions 913 to 927 are enriched in basic and acidic residues; sequence LEDRKPYSSRLEKDD. S994 bears the Phosphoserine mark.

PP1 comprises a catalytic subunit, PPP1CA, PPP1CB or PPP1CC, and one or several targeting or regulatory subunits. PPP1R12A mediates binding to myosin. Interacts with ARHA and CIT. Binds PPP1R12B, ROCK1 and IL16. Interacts directly with PRKG1. Non-covalent dimer of 2 dimers; PRKG1-PRKG1 and PPP1R12A-PPP1R12A. Interacts with SMTNL1. Interacts with PPP1CB; the interaction is direct. Interacts (when phosphorylated at Ser-445, Ser-472 and Ser-910) with 14-3-3. Interacts with ROCK1 and ROCK2. Interacts with isoform 1 and isoform 2 of ZIPK/DAPK3. Interacts with RAF1. Interacts with HIF1AN. Interacts with NCKAP1L. Post-translationally, phosphorylated by CIT (Rho-associated kinase). Phosphorylated cooperatively by ROCK1 and CDC42BP on Thr-694. Phosphorylated on upon DNA damage, probably by ATM or ATR. In vitro, phosphorylation of Ser-693 by PKA and PKG appears to prevent phosphorylation of the inhibitory site Thr-694, probably mediated by PRKG1. Phosphorylation at Ser-445, Ser-472 and Ser-909 by NUAK1 promotes interaction with 14-3-3, leading to inhibit interaction with myosin light chain MLC2, preventing dephosphorylation of MLC2. May be phosphorylated at Thr-694 by DMPK; may inhibit the myosin phosphatase activity. Phosphorylated at Ser-473 by CDK1 during mitosis, creating docking sites for the POLO box domains of PLK1. Subsequently, PLK1 binds and phosphorylates PPP1R12A. As to expression, expressed in striated and vascular smooth muscle, specificcally in type 2a fibers (at protein level). Expression levels are 20-30% higher in developed males than females (at protein level).

It localises to the cytoplasm. The protein localises to the cytoskeleton. Its subcellular location is the stress fiber. In terms of biological role, key regulator of protein phosphatase 1C (PPP1C). Mediates binding to myosin. As part of the PPP1C complex, involved in dephosphorylation of PLK1. Capable of inhibiting HIF1AN-dependent suppression of HIF1A activity. The sequence is that of Protein phosphatase 1 regulatory subunit 12A from Mus musculus (Mouse).